Reading from the N-terminus, the 1283-residue chain is 5-oxoprolinase PfmaA (1283 aa).

The disordered stretch occupies residues 1256–1283 (NTPGGGAWGKPEGDADGYREEDQAGDGI). Over residues 1266-1277 (PEGDADGYREED) the composition is skewed to basic and acidic residues.

Belongs to the oxoprolinase family. In terms of assembly, homodimer.

It carries out the reaction 5-oxo-L-proline + ATP + 2 H2O = L-glutamate + ADP + phosphate + H(+). Its function is as follows. 5-oxoprolinase; part of the gene cluster that mediates the biosynthesis of dihydroxynaphthalene (DHN)-melanin, a bluish-green pigment forming a dark layer in the conidial wall that protects the conidia from UV radiations. The first step of the pathway is the production of the pentaketide 1,3,6,8-tetrahydroxynaphthalene (1,3,6,8-THN or T4HN) by the polyketide synthase PfmaE though condensation of acetyl-CoA with malonyl-CoA. T4HN is not stable and easily oxidizes into the stable form flaviolin. T4HN is also substrate of the hydroxynaphthalene reductase PfmaG to yield scytalone. The scytalone dehydratase PfmaJ then reduces scytalone to 1,3,8-THN. 1,3,8-THN is then substrate of the hydroxynaphthalene reductase PfmaI to yield vermelone. Vermelone is further converted by the multicopper oxidase PfmaD to 1,8-DHN. Finally the laccase PFICI_06862 transforms 1,8-DHN to DHN-melanin. The roles of the 5-oxoprolinase PfmaA and the proline iminopeptidase PfmaB within the cluster have not been elucidated yet. This Pestalotiopsis fici (strain W106-1 / CGMCC3.15140) protein is 5-oxoprolinase PfmaA.